A 496-amino-acid chain; its full sequence is L-arabinose isomerase (496 aa).

The Mn(2+) site is built by E302, E329, H346, and H445.

The protein belongs to the arabinose isomerase family. Mn(2+) is required as a cofactor.

The catalysed reaction is beta-L-arabinopyranose = L-ribulose. Its pathway is carbohydrate degradation; L-arabinose degradation via L-ribulose; D-xylulose 5-phosphate from L-arabinose (bacterial route): step 1/3. In terms of biological role, catalyzes the conversion of L-arabinose to L-ribulose. In Thermotoga neapolitana (strain ATCC 49049 / DSM 4359 / NBRC 107923 / NS-E), this protein is L-arabinose isomerase.